The chain runs to 361 residues: Aminomethyltransferase (361 aa).

This sequence belongs to the GcvT family. The glycine cleavage system is composed of four proteins: P, T, L and H.

The enzyme catalyses N(6)-[(R)-S(8)-aminomethyldihydrolipoyl]-L-lysyl-[protein] + (6S)-5,6,7,8-tetrahydrofolate = N(6)-[(R)-dihydrolipoyl]-L-lysyl-[protein] + (6R)-5,10-methylene-5,6,7,8-tetrahydrofolate + NH4(+). The glycine cleavage system catalyzes the degradation of glycine. The polypeptide is Aminomethyltransferase (Bacteroides fragilis (strain ATCC 25285 / DSM 2151 / CCUG 4856 / JCM 11019 / LMG 10263 / NCTC 9343 / Onslow / VPI 2553 / EN-2)).